The primary structure comprises 196 residues: MSSKEQKTPEGQAPEEIITEQHDDVEAVEPEVSAEQVDPRDEKIANLEAQLAEAQKREREVMLRAKADEDNLRRRTEQDIEKAHKFALEKFVNELLPVIDSLDRALEVADKANPDLAPMVEGIELTLKSMLDVVRKFGVEVIADTNVPLDPNVHQAIAMVESEDVAAGNVLAVMQKGYTLNGRTIRAAMVTVAKAK.

Positions 1–41 (MSSKEQKTPEGQAPEEIITEQHDDVEAVEPEVSAEQVDPRD) are disordered.

Belongs to the GrpE family. In terms of assembly, homodimer.

Its subcellular location is the cytoplasm. Its function is as follows. Participates actively in the response to hyperosmotic and heat shock by preventing the aggregation of stress-denatured proteins, in association with DnaK and GrpE. It is the nucleotide exchange factor for DnaK and may function as a thermosensor. Unfolded proteins bind initially to DnaJ; upon interaction with the DnaJ-bound protein, DnaK hydrolyzes its bound ATP, resulting in the formation of a stable complex. GrpE releases ADP from DnaK; ATP binding to DnaK triggers the release of the substrate protein, thus completing the reaction cycle. Several rounds of ATP-dependent interactions between DnaJ, DnaK and GrpE are required for fully efficient folding. This chain is Protein GrpE, found in Klebsiella pneumoniae (strain 342).